A 153-amino-acid chain; its full sequence is Ribosomal RNA large subunit methyltransferase H (153 aa).

S-adenosyl-L-methionine-binding positions include L70, G102, and 121–126 (LSAMTF).

It belongs to the RNA methyltransferase RlmH family. In terms of assembly, homodimer.

Its subcellular location is the cytoplasm. It carries out the reaction pseudouridine(1915) in 23S rRNA + S-adenosyl-L-methionine = N(3)-methylpseudouridine(1915) in 23S rRNA + S-adenosyl-L-homocysteine + H(+). Functionally, specifically methylates the pseudouridine at position 1915 (m3Psi1915) in 23S rRNA. This is Ribosomal RNA large subunit methyltransferase H from Trichlorobacter lovleyi (strain ATCC BAA-1151 / DSM 17278 / SZ) (Geobacter lovleyi).